We begin with the raw amino-acid sequence, 257 residues long: Global transcriptional regulator CodY (257 aa).

The segment at 1 to 155 is GAF domain; the sequence is MSLLSKTREL…AATVIGMEIL (155 aa). The H-T-H motif DNA-binding region spans 203–222; that stretch reads ASKVADRVGITRSVIVNALR.

It belongs to the CodY family.

Its subcellular location is the cytoplasm. Functionally, DNA-binding global transcriptional regulator which is involved in the adaptive response to starvation and acts by directly or indirectly controlling the expression of numerous genes in response to nutrient availability. During rapid exponential growth, CodY is highly active and represses genes whose products allow adaptation to nutrient depletion. This Staphylococcus epidermidis (strain ATCC 12228 / FDA PCI 1200) protein is Global transcriptional regulator CodY.